The primary structure comprises 174 residues: NADH-ubiquinone oxidoreductase chain 6 (174 aa).

6 helical membrane-spanning segments follow: residues 1 to 21 (MTYA…GFSS), 24 to 44 (SPIY…AIIL), 47 to 67 (GGGY…MVVF), 86 to 106 (VEVL…VLWV), 111 to 131 (GMVV…EGEG), and 151 to 171 (WLVV…IEIA).

The protein belongs to the complex I subunit 6 family. Core subunit of respiratory chain NADH dehydrogenase (Complex I) which is composed of 45 different subunits.

It is found in the mitochondrion inner membrane. It catalyses the reaction a ubiquinone + NADH + 5 H(+)(in) = a ubiquinol + NAD(+) + 4 H(+)(out). Core subunit of the mitochondrial membrane respiratory chain NADH dehydrogenase (Complex I) which catalyzes electron transfer from NADH through the respiratory chain, using ubiquinone as an electron acceptor. Essential for the catalytic activity and assembly of complex I. This chain is NADH-ubiquinone oxidoreductase chain 6 (MT-ND6), found in Pan troglodytes (Chimpanzee).